The following is a 646-amino-acid chain: UvrABC system protein B (646 aa).

The Helicase ATP-binding domain maps to 29–411; that stretch reads LEKNPEKSKQ…SNQVVEQIIR (383 aa). 42–49 contributes to the ATP binding site; it reads GVTGSGKT. Residues 95–118 carry the Beta-hairpin motif; sequence YYDYYQPESYIPQKDQYIEKDAQI. One can recognise a Helicase C-terminal domain in the interval 428 to 590; sequence QVEDIIKETE…ITPQTIVKPI (163 aa). A UVR domain is found at 609 to 644; sequence PNVIVELEAEMYEAAEALEFEKAIKIRDTIAKLKKK.

It belongs to the UvrB family. Forms a heterotetramer with UvrA during the search for lesions. Interacts with UvrC in an incision complex.

The protein localises to the cytoplasm. In terms of biological role, the UvrABC repair system catalyzes the recognition and processing of DNA lesions. A damage recognition complex composed of 2 UvrA and 2 UvrB subunits scans DNA for abnormalities. Upon binding of the UvrA(2)B(2) complex to a putative damaged site, the DNA wraps around one UvrB monomer. DNA wrap is dependent on ATP binding by UvrB and probably causes local melting of the DNA helix, facilitating insertion of UvrB beta-hairpin between the DNA strands. Then UvrB probes one DNA strand for the presence of a lesion. If a lesion is found the UvrA subunits dissociate and the UvrB-DNA preincision complex is formed. This complex is subsequently bound by UvrC and the second UvrB is released. If no lesion is found, the DNA wraps around the other UvrB subunit that will check the other stand for damage. This Methanococcus maripaludis (strain DSM 14266 / JCM 13030 / NBRC 101832 / S2 / LL) protein is UvrABC system protein B.